Consider the following 426-residue polypeptide: Glutamate-1-semialdehyde 2,1-aminomutase (426 aa).

Lys-265 carries the N6-(pyridoxal phosphate)lysine modification.

The protein belongs to the class-III pyridoxal-phosphate-dependent aminotransferase family. HemL subfamily. Homodimer. Pyridoxal 5'-phosphate is required as a cofactor.

The protein localises to the cytoplasm. It catalyses the reaction (S)-4-amino-5-oxopentanoate = 5-aminolevulinate. It participates in porphyrin-containing compound metabolism; protoporphyrin-IX biosynthesis; 5-aminolevulinate from L-glutamyl-tRNA(Glu): step 2/2. The protein is Glutamate-1-semialdehyde 2,1-aminomutase of Aliarcobacter butzleri (strain RM4018) (Arcobacter butzleri).